We begin with the raw amino-acid sequence, 211 residues long: N-(5'-phosphoribosyl)anthranilate isomerase (211 aa).

This sequence belongs to the TrpF family.

It catalyses the reaction N-(5-phospho-beta-D-ribosyl)anthranilate = 1-(2-carboxyphenylamino)-1-deoxy-D-ribulose 5-phosphate. Its pathway is amino-acid biosynthesis; L-tryptophan biosynthesis; L-tryptophan from chorismate: step 3/5. The chain is N-(5'-phosphoribosyl)anthranilate isomerase from Hyphomonas neptunium (strain ATCC 15444).